The sequence spans 316 residues: Retinol dehydrogenase 7 (316 aa).

An NADP(+)-binding site is contributed by 33–57 (FITGCDSGFGNLLARQLDRRGMRVL). Ser-163 is a substrate binding site. Residue Tyr-175 is the Proton acceptor of the active site.

It belongs to the short-chain dehydrogenases/reductases (SDR) family. Highly expressed in liver. Also expressed in lung, eye, kidney, and brain.

The protein resides in the microsome. The protein localises to the endoplasmic reticulum. It catalyses the reaction all-trans-retinol--[retinol-binding protein] + NAD(+) = all-trans-retinal--[retinol-binding protein] + NADH + H(+). The protein operates within cofactor metabolism; retinol metabolism. In terms of biological role, acts on androgens and retinols, i.e. has steroid 3-alpha- and 17-beta-dehydrogenase and cis/trans-retinol catalytic activities. This chain is Retinol dehydrogenase 7 (Rdh7), found in Mus musculus (Mouse).